A 453-amino-acid chain; its full sequence is Carbamoyl phosphate synthase arginine-specific small chain (453 aa).

A mitochondrion-targeting transit peptide spans 1-28 (MFARVFKAMPARASALTSVNASIPARFM). Residues 219 to 406 (HVAVIDCGVK…IDSVKKYKAS (188 aa)) enclose the Glutamine amidotransferase type-1 domain. Cysteine 295 serves as the catalytic Nucleophile. Active-site residues include histidine 379 and glutamate 381.

Belongs to the CarA family. In terms of assembly, heterodimer composed of 2 chains; the small (or glutamine) chain promotes the hydrolysis of glutamine to ammonia, which is used by the large (or ammonia) chain to synthesize carbamoyl phosphate.

Its subcellular location is the mitochondrion matrix. It catalyses the reaction hydrogencarbonate + L-glutamine + 2 ATP + H2O = carbamoyl phosphate + L-glutamate + 2 ADP + phosphate + 2 H(+). It carries out the reaction L-glutamine + H2O = L-glutamate + NH4(+). The protein operates within amino-acid biosynthesis; L-arginine biosynthesis; carbamoyl phosphate from bicarbonate: step 1/1. Functionally, small subunit of the arginine-specific carbamoyl phosphate synthase (CPSase). CPSase catalyzes the formation of carbamoyl phosphate from the ammonia moiety of glutamine, carbonate, and phosphate donated by ATP, the first step of the arginine biosynthetic pathway. The small subunit (glutamine amidotransferase) binds and cleaves glutamine to supply the large subunit with the substrate ammonia. The polypeptide is Carbamoyl phosphate synthase arginine-specific small chain (cpa1) (Aspergillus fumigatus (strain ATCC MYA-4609 / CBS 101355 / FGSC A1100 / Af293) (Neosartorya fumigata)).